The sequence spans 233 residues: ATP-dependent dethiobiotin synthetase BioD (233 aa).

12–17 serves as a coordination point for ATP; that stretch reads GVGKTI. Thr-16 contacts Mg(2+). Residue Lys-37 is part of the active site. Residue Ser-41 participates in substrate binding. ATP-binding positions include Asp-51, 112 to 115, and 202 to 204; these read EGAG and PKL. Residues Asp-51 and Glu-112 each contribute to the Mg(2+) site.

This sequence belongs to the dethiobiotin synthetase family. In terms of assembly, homodimer. Mg(2+) serves as cofactor.

The protein localises to the cytoplasm. It carries out the reaction (7R,8S)-7,8-diammoniononanoate + CO2 + ATP = (4R,5S)-dethiobiotin + ADP + phosphate + 3 H(+). It participates in cofactor biosynthesis; biotin biosynthesis; biotin from 7,8-diaminononanoate: step 1/2. Catalyzes a mechanistically unusual reaction, the ATP-dependent insertion of CO2 between the N7 and N8 nitrogen atoms of 7,8-diaminopelargonic acid (DAPA, also called 7,8-diammoniononanoate) to form a ureido ring. In Bacillus velezensis (strain DSM 23117 / BGSC 10A6 / LMG 26770 / FZB42) (Bacillus amyloliquefaciens subsp. plantarum), this protein is ATP-dependent dethiobiotin synthetase BioD.